We begin with the raw amino-acid sequence, 244 residues long: Uracil phosphoribosyltransferase (244 aa).

GTP is bound by residues Lys-59, Arg-68, and 102 to 105 (YSKI). Arg-112 serves as a coordination point for 5-phospho-alpha-D-ribose 1-diphosphate. Arg-129 contributes to the GTP binding site. A 5-phospho-alpha-D-ribose 1-diphosphate-binding site is contributed by Arg-137. Arg-158 serves as a coordination point for GTP. 5-phospho-alpha-D-ribose 1-diphosphate is bound by residues Asp-164 and 164–172 (DPMCATAGS). Uracil is bound by residues Ile-229 and 234–236 (GDF). Asp-235 lines the 5-phospho-alpha-D-ribose 1-diphosphate pocket.

This sequence belongs to the UPRTase family. Monomer. Forms homodimers in presence of substrates and homotetramers in the presence of GTP. Mg(2+) is required as a cofactor.

It carries out the reaction UMP + diphosphate = 5-phospho-alpha-D-ribose 1-diphosphate + uracil. Its pathway is pyrimidine metabolism; UMP biosynthesis via salvage pathway; UMP from uracil: step 1/1. Its activity is regulated as follows. Allosterically activated by GTP. Binding of GTP leads to 5-time activation of the enzyme. Functionally, catalyzes the conversion of uracil and 5-phospho-alpha-D-ribose 1-diphosphate (PRPP) to UMP and diphosphate. The protein is Uracil phosphoribosyltransferase (uprt) of Toxoplasma gondii.